The chain runs to 236 residues: Baculoviral IAP repeat-containing protein 8 (236 aa).

One copy of the BIR repeat lies at R7 to L70. Positions 39, 42, 59, and 66 each coordinate Zn(2+). The RING-type zinc finger occupies C189 to S224.

The protein belongs to the IAP family. As to quaternary structure, binds to caspase-9.

It localises to the cytoplasm. In terms of biological role, protects against apoptosis mediated by BAX. This is Baculoviral IAP repeat-containing protein 8 (BIRC8) from Pan troglodytes (Chimpanzee).